The primary structure comprises 531 residues: Protein SIS2 (531 aa).

Positions 1-20 (MPSDKDIKSPAQPKKEEEIP) are enriched in basic and acidic residues. Disordered regions lie at residues 1–42 (MPSD…ANII), 88–127 (SPDS…KSPS), 139–168 (RPVR…EPSS), 180–261 (SLRA…DPRL), and 461–531 (YPED…TTNL). The segment covering 155–168 (LTPITSPQHSEPSS) has biased composition (polar residues). A compositionally biased stretch (low complexity) spans 183–198 (ATTNSISSAAASNQST). The segment covering 204–213 (SGGGGGGGGA) has biased composition (gly residues). Over residues 214-249 (NTATSSNSTTSNTALAAQGTTTTTTTTNSNSNTTTT) the composition is skewed to low complexity. 2 stretches are compositionally biased toward acidic residues: residues 462–472 (PEDEDEDEADD) and 481–514 (AIID…EEDP).

It belongs to the HFCD (homooligomeric flavin containing Cys decarboxylase) superfamily.

It localises to the nucleus. Its subcellular location is the cytoplasm. In terms of biological role, may stimulate expression of certain genes that are periodically expressed during late G1. Also modulates the expression of the ENA1 ATPase. In Candida tropicalis (Yeast), this protein is Protein SIS2 (SIS2).